The chain runs to 98 residues: ESAT-6-like protein EsxM (98 aa).

It belongs to the WXG100 family. CFP-10 subfamily.

It is found in the secreted. The sequence is that of ESAT-6-like protein EsxM (esxM) from Mycobacterium bovis (strain ATCC BAA-935 / AF2122/97).